A 221-amino-acid polypeptide reads, in one-letter code: UPF0502 protein VSAL_II0605 (221 aa).

This sequence belongs to the UPF0502 family.

The sequence is that of UPF0502 protein VSAL_II0605 from Aliivibrio salmonicida (strain LFI1238) (Vibrio salmonicida (strain LFI1238)).